We begin with the raw amino-acid sequence, 254 residues long: Imidazole glycerol phosphate synthase subunit HisF (254 aa).

Active-site residues include D11 and D130.

The protein belongs to the HisA/HisF family. As to quaternary structure, heterodimer of HisH and HisF.

The protein localises to the cytoplasm. It catalyses the reaction 5-[(5-phospho-1-deoxy-D-ribulos-1-ylimino)methylamino]-1-(5-phospho-beta-D-ribosyl)imidazole-4-carboxamide + L-glutamine = D-erythro-1-(imidazol-4-yl)glycerol 3-phosphate + 5-amino-1-(5-phospho-beta-D-ribosyl)imidazole-4-carboxamide + L-glutamate + H(+). Its pathway is amino-acid biosynthesis; L-histidine biosynthesis; L-histidine from 5-phospho-alpha-D-ribose 1-diphosphate: step 5/9. Functionally, IGPS catalyzes the conversion of PRFAR and glutamine to IGP, AICAR and glutamate. The HisF subunit catalyzes the cyclization activity that produces IGP and AICAR from PRFAR using the ammonia provided by the HisH subunit. In Gloeobacter violaceus (strain ATCC 29082 / PCC 7421), this protein is Imidazole glycerol phosphate synthase subunit HisF.